A 253-amino-acid chain; its full sequence is BRI3-binding protein (253 aa).

4 helical membrane-spanning segments follow: residues 19 to 39 (VLLP…PGAQ), 131 to 151 (ALVL…TLGF), 164 to 181 (FWLV…YILH), and 190 to 210 (AVLP…MGYW). The stretch at 219–253 (SPSVEEKLEHLENQVRLLNIRLNRVLENLDRSKDK) forms a coiled coil. Phosphoserine is present on Ser250.

As to quaternary structure, interacts with LETMD1. Interacts with BRI3. Interacts with BRI3; the interaction is weak. Interacts with TMEM238L.

It localises to the mitochondrion outer membrane. Functionally, involved in tumorigenesis and may function by stabilizing p53/TP53. The protein is BRI3-binding protein of Mus musculus (Mouse).